The primary structure comprises 177 residues: Large ribosomal subunit protein uL6 (177 aa).

This sequence belongs to the universal ribosomal protein uL6 family. In terms of assembly, part of the 50S ribosomal subunit.

Its function is as follows. This protein binds to the 23S rRNA, and is important in its secondary structure. It is located near the subunit interface in the base of the L7/L12 stalk, and near the tRNA binding site of the peptidyltransferase center. This Psychromonas ingrahamii (strain DSM 17664 / CCUG 51855 / 37) protein is Large ribosomal subunit protein uL6.